A 191-amino-acid chain; its full sequence is Phospholipase A2-delta (191 aa).

The N-terminal stretch at Met1–Ser25 is a signal peptide. Intrachain disulfides connect Cys29-Cys56, Cys33-Cys62, Cys38-Cys115, Cys49-Cys69, Cys68-Cys93, and Cys75-Cys86. Tyr48, Gly50, and Tyr53 together coordinate Ca(2+). The active site involves His72. Residue Asp73 participates in Ca(2+) binding. Residues Lys161–Ser191 are disordered.

This sequence belongs to the phospholipase A2 family. It depends on Ca(2+) as a cofactor. In terms of tissue distribution, specifically expressed in flowers but at a low level. Detected specifically in the pollen.

Its subcellular location is the secreted. It localises to the endoplasmic reticulum. The catalysed reaction is a 1,2-diacyl-sn-glycero-3-phosphocholine + H2O = a 1-acyl-sn-glycero-3-phosphocholine + a fatty acid + H(+). PA2 catalyzes the calcium-dependent hydrolysis of the 2-acyl groups in 3-sn-phosphoglycerides. Releases lysophospholipids (LPLs) and free fatty acids (FFAs) from membrane phospholipids in response to hormones and other external stimuli. Plays a role in pollen development and germination and tube growth. The polypeptide is Phospholipase A2-delta (PLA2-DELTA) (Arabidopsis thaliana (Mouse-ear cress)).